The following is a 425-amino-acid chain: Serine hydroxymethyltransferase (425 aa).

(6S)-5,6,7,8-tetrahydrofolate is bound by residues L128 and 132-134; that span reads GHL. K237 bears the N6-(pyridoxal phosphate)lysine mark.

This sequence belongs to the SHMT family. As to quaternary structure, homodimer. Pyridoxal 5'-phosphate serves as cofactor.

The protein resides in the cytoplasm. The enzyme catalyses (6R)-5,10-methylene-5,6,7,8-tetrahydrofolate + glycine + H2O = (6S)-5,6,7,8-tetrahydrofolate + L-serine. It functions in the pathway one-carbon metabolism; tetrahydrofolate interconversion. The protein operates within amino-acid biosynthesis; glycine biosynthesis; glycine from L-serine: step 1/1. In terms of biological role, catalyzes the reversible interconversion of serine and glycine with tetrahydrofolate (THF) serving as the one-carbon carrier. This reaction serves as the major source of one-carbon groups required for the biosynthesis of purines, thymidylate, methionine, and other important biomolecules. Also exhibits THF-independent aldolase activity toward beta-hydroxyamino acids, producing glycine and aldehydes, via a retro-aldol mechanism. The protein is Serine hydroxymethyltransferase of Wolbachia sp. subsp. Drosophila simulans (strain wRi).